Here is a 318-residue protein sequence, read N- to C-terminus: NAD(P)H-dependent D-xylose reductase (318 aa).

The Proton donor role is filled by Tyr48. Position 110 (His110) interacts with substrate. Residues 165–166 (SN), 214–223 (SSFGPQSFVE), and 270–280 (KSNTVPRLLEN) each bind NAD(+).

Belongs to the aldo/keto reductase family.

It catalyses the reaction xylitol + NAD(+) = D-xylose + NADH + H(+). The enzyme catalyses xylitol + NADP(+) = D-xylose + NADPH + H(+). The protein operates within carbohydrate metabolism; D-xylose degradation. Its activity is regulated as follows. NADP(+) is a potent inhibitor of both the NADPH- and NADH-linked xylose reduction, whereas NAD(+) showS strong inhibition only with the NADH-linked reaction. Functionally, reduces D-xylose into xylitol. Has a preference for NADPH, but can also utilize NADH as cosubstrate. The sequence is that of NAD(P)H-dependent D-xylose reductase (XYL1) from Scheffersomyces stipitis (strain ATCC 58785 / CBS 6054 / NBRC 10063 / NRRL Y-11545) (Yeast).